A 637-amino-acid chain; its full sequence is 1-deoxy-D-xylulose-5-phosphate synthase (637 aa).

Residues His76 and 117–119 each bind thiamine diphosphate; that span reads GHS. Asp148 is a Mg(2+) binding site. Thiamine diphosphate is bound by residues 149-150, Asn177, Tyr294, and Glu381; that span reads GA. Position 177 (Asn177) interacts with Mg(2+).

It belongs to the transketolase family. DXPS subfamily. As to quaternary structure, homodimer. The cofactor is Mg(2+). Thiamine diphosphate serves as cofactor.

The catalysed reaction is D-glyceraldehyde 3-phosphate + pyruvate + H(+) = 1-deoxy-D-xylulose 5-phosphate + CO2. The protein operates within metabolic intermediate biosynthesis; 1-deoxy-D-xylulose 5-phosphate biosynthesis; 1-deoxy-D-xylulose 5-phosphate from D-glyceraldehyde 3-phosphate and pyruvate: step 1/1. Catalyzes the acyloin condensation reaction between C atoms 2 and 3 of pyruvate and glyceraldehyde 3-phosphate to yield 1-deoxy-D-xylulose-5-phosphate (DXP). This chain is 1-deoxy-D-xylulose-5-phosphate synthase, found in Neisseria gonorrhoeae (strain ATCC 700825 / FA 1090).